The primary structure comprises 373 residues: ATP phosphoribosyltransferase regulatory subunit (373 aa).

This sequence belongs to the class-II aminoacyl-tRNA synthetase family. HisZ subfamily. In terms of assembly, heteromultimer composed of HisG and HisZ subunits.

The protein resides in the cytoplasm. The protein operates within amino-acid biosynthesis; L-histidine biosynthesis; L-histidine from 5-phospho-alpha-D-ribose 1-diphosphate: step 1/9. Its function is as follows. Required for the first step of histidine biosynthesis. May allow the feedback regulation of ATP phosphoribosyltransferase activity by histidine. This is ATP phosphoribosyltransferase regulatory subunit from Chelativorans sp. (strain BNC1).